The following is a 41-amino-acid chain: Large ribosomal subunit protein bL36 (41 aa).

This sequence belongs to the bacterial ribosomal protein bL36 family.

In Edwardsiella ictaluri (strain 93-146), this protein is Large ribosomal subunit protein bL36.